The primary structure comprises 232 residues: Phosphoglycolate phosphatase (232 aa).

Catalysis depends on D13, which acts as the Nucleophile. The Mg(2+) site is built by D13, D15, and D175.

The protein belongs to the HAD-like hydrolase superfamily. CbbY/CbbZ/Gph/YieH family. Monomer. Mg(2+) serves as cofactor. Chloride is required as a cofactor.

It catalyses the reaction 2-phosphoglycolate + H2O = glycolate + phosphate. The protein operates within organic acid metabolism; glycolate biosynthesis; glycolate from 2-phosphoglycolate: step 1/1. Functionally, specifically catalyzes the dephosphorylation of 2-phosphoglycolate. Is involved in the dissimilation of the intracellular 2-phosphoglycolate formed during the DNA repair of 3'-phosphoglycolate ends, a major class of DNA lesions induced by oxidative stress. This Yersinia pestis protein is Phosphoglycolate phosphatase.